The primary structure comprises 536 residues: Potassium voltage-gated channel protein shk-1 (536 aa).

Disordered stretches follow at residues methionine 1–lysine 31 and alanine 87–threonine 131. Over methionine 1–arginine 275 the chain is Cytoplasmic. A compositionally biased stretch (polar residues) spans glutamine 116 to threonine 131. Residues isoleucine 276 to threonine 296 form a helical membrane-spanning segment. The Extracellular segment spans residues valine 297–histidine 322. The helical transmembrane segment at tyrosine 323–leucine 343 threads the bilayer. Over arginine 344 to threonine 356 the chain is Cytoplasmic. Residues serine 357 to alanine 377 traverse the membrane as a helical segment. Residues aspartate 378–glutamate 425 are Extracellular-facing. Residues phenylalanine 426–phenylalanine 446 traverse the membrane as a helical; Voltage-sensor segment. Topologically, residues alanine 447–serine 458 are cytoplasmic. Residues isoleucine 459–valine 479 traverse the membrane as a helical segment. Over proline 480–lysine 486 the chain is Extracellular. A helical membrane pass occupies residues valine 487–isoleucine 507. Residues valine 508–alanine 536 lie on the Cytoplasmic side of the membrane.

It belongs to the potassium channel family. A (Shaker) (TC 1.A.1.2) subfamily. Shaker sub-subfamily. As to expression, expressed in a variety of interneurons and sensory neurons, as well as body wall muscle.

Its subcellular location is the membrane. Functionally, mediates the voltage-dependent potassium ion permeability of excitable membranes. Has an important role in repolarization and in regulating the pattern of action potential firing. Isoform a expresses currents in a more depolarized voltage range than isoform d. In Caenorhabditis elegans, this protein is Potassium voltage-gated channel protein shk-1.